A 524-amino-acid chain; its full sequence is General transcription factor IIF subunit 1 (524 aa).

2 disordered regions span residues 56–76 (MYQEEEMPESGAGSEYNRKQR) and 181–462 (RLKD…IQLT). A compositionally biased stretch (basic residues) spans 242–257 (KPQKKVPAKGGKKKKR). Acidic residues predominate over residues 262 to 289 (EALEDSDDGDFEGQEVDYMSDESSSDEE). The span at 290–307 (LPGKIKPAKEEEGPKGLD) shows a compositional bias: basic and acidic residues. 2 stretches are compositionally biased toward acidic residues: residues 308-327 (EQSESSEESEEEKAEEEEGE) and 347-358 (SDESETSEDSDI). Residues 368 to 378 (QKKKTPPKKDK) are compositionally biased toward basic residues. Positions 381 to 397 (GSNSSSRGNSRPGTPSP) are enriched in low complexity. Residues 436 to 459 (PQNTSGKSTPQPQSGKSTPSSGDI) show a composition bias toward polar residues.

The protein belongs to the TFIIF alpha subunit family. In terms of assembly, heterodimer of an alpha and a beta subunit. In terms of processing, phosphorylated on Ser and other residues by TAF1 and casein kinase II-like kinases.

It is found in the nucleus. Its function is as follows. TFIIF is a general transcription initiation factor that binds to RNA polymerase II and helps to recruit it to the initiation complex in collaboration with TFIIB. It promotes transcription elongation. This Xenopus laevis (African clawed frog) protein is General transcription factor IIF subunit 1 (gtf2f1).